We begin with the raw amino-acid sequence, 97 residues long: Small integral membrane protein 8 (97 aa).

The disordered stretch occupies residues 1–24; sequence MSSAPEPPTFKKEPPKEKDFQSPG. Basic and acidic residues predominate over residues 9–20; sequence TFKKEPPKEKDF. The chain crosses the membrane as a helical span at residues 48–67; it reads PVMAFGLVTLSLCVAYIGYL.

This sequence belongs to the SMIM8 family.

Its subcellular location is the membrane. In Pongo abelii (Sumatran orangutan), this protein is Small integral membrane protein 8 (SMIM8).